We begin with the raw amino-acid sequence, 339 residues long: DNA-directed RNA polymerase subunit alpha (339 aa).

The tract at residues 1–233 is alpha N-terminal domain (alpha-NTD); that stretch reads MVREEVAGST…DLFLPFLHAE (233 aa). The segment at 264 to 339 is alpha C-terminal domain (alpha-CTD); sequence KKGIPLNCIF…IDLLKNKLSF (76 aa).

This sequence belongs to the RNA polymerase alpha chain family. In plastids the minimal PEP RNA polymerase catalytic core is composed of four subunits: alpha, beta, beta', and beta''. When a (nuclear-encoded) sigma factor is associated with the core the holoenzyme is formed, which can initiate transcription.

The protein resides in the plastid. Its subcellular location is the chloroplast. The catalysed reaction is RNA(n) + a ribonucleoside 5'-triphosphate = RNA(n+1) + diphosphate. In terms of biological role, DNA-dependent RNA polymerase catalyzes the transcription of DNA into RNA using the four ribonucleoside triphosphates as substrates. This Thinopyrum elongatum (Tall wheatgrass) protein is DNA-directed RNA polymerase subunit alpha.